A 1284-amino-acid polypeptide reads, in one-letter code: ABC multidrug transporter atrC (1284 aa).

Over residues 1-11 (MKSTAESKETP) the composition is skewed to basic and acidic residues. The interval 1-24 (MKSTAESKETPSQDESTTSVPCTE) is disordered. A run of 6 helical transmembrane segments spans residues 55–75 (AVAI…NLIF), 99–119 (AAEL…LSYT), 178–198 (IGLL…AFVV), 203–223 (TLIC…VAAV), 282–302 (LLGL…GLAF), and 320–340 (IFTV…LAPY). The ABC transmembrane type-1 1 domain occupies 55 to 346 (AVAILAACAS…LAPYSIEFSR (292 aa)). Positions 381 to 626 (VELENVTFSY…DGVYAGLVKI (246 aa)) constitute an ABC transporter 1 domain. Asparagine 385 and asparagine 401 each carry an N-linked (GlcNAc...) asparagine glycan. An ATP-binding site is contributed by 416–423 (GQSGSGKS). Residues asparagine 488 and asparagine 632 are each glycosylated (N-linked (GlcNAc...) asparagine). Transmembrane regions (helical) follow at residues 705–725 (LVVL…AILM) and 745–765 (FYAS…LAVG). In terms of domain architecture, ABC transmembrane type-1 2 spans 705 to 992 (LVVLLGCLGG…LFQWSTSITK (288 aa)). An N-linked (GlcNAc...) asparagine glycan is attached at asparagine 800. Transmembrane regions (helical) follow at residues 824-844 (IALV…AIAF), 846-866 (WKLG…AGMV), 931-951 (MICF…GFWY), and 955-975 (LVSL…SVFF). Asparagine 995 is a glycosylation site (N-linked (GlcNAc...) asparagine). The region spanning 1027-1280 (IAMDNVRFSY…GGLYRRMCEA (254 aa)) is the ABC transporter 2 domain. An ATP-binding site is contributed by 1062-1069 (GSSGCGKS). The N-linked (GlcNAc...) asparagine glycan is linked to asparagine 1122.

It belongs to the ABC transporter superfamily. ABCB family. Multidrug resistance exporter (TC 3.A.1.201) subfamily.

Its subcellular location is the cell membrane. Its function is as follows. Pleiotropic ABC efflux transporter involved in the protection of the cells against a wide range of toxic compounds. This is ABC multidrug transporter atrC from Emericella nidulans (strain FGSC A4 / ATCC 38163 / CBS 112.46 / NRRL 194 / M139) (Aspergillus nidulans).